We begin with the raw amino-acid sequence, 637 residues long: Probable ATP-binding protein YheS (637 aa).

2 consecutive ABC transporter domains span residues 2–246 and 313–527; these read IVFS…AQQQ and LKME…KQEN. Residues 34 to 41 and 345 to 352 contribute to the ATP site; these read GKNGCGKS and GRNGAGKS. The segment at 523–559 is disordered; it reads QKQENQTDEAPKENANSAQARKDQKRREAELRAQTQP. Positions 542 to 553 are enriched in basic and acidic residues; the sequence is ARKDQKRREAEL.

This sequence belongs to the ABC transporter superfamily. ABCF family. YheS subfamily.

Its function is as follows. Genetic data indicate it may be involved in ribosome assembly or function. Ectopic expression exacerbates the cold-sensitive growth phenotype of a bipA deletion. The chain is Probable ATP-binding protein YheS (yheS) from Escherichia coli O6:H1 (strain CFT073 / ATCC 700928 / UPEC).